The primary structure comprises 535 residues: Zinc finger protein squeeze (535 aa).

Low complexity-rich tracts occupy residues 70 to 97 (MVMEQQPHPDQQQQQHLHHPQQQQHPPQ) and 131 to 142 (SSASGSGSNGSS). Residues 70–157 (MVMEQQPHPD…RRGDGDQAKP (88 aa)) are disordered. Positions 145 to 156 (EESRRGDGDQAK) are enriched in basic and acidic residues. 5 C2H2-type zinc fingers span residues 158–180 (YKCGSCSKSFANSSYLSQHTRIH), 186–208 (YRCEICQRKFTQLSHLQQHIRTH), 214–238 (YKCRHAGCPKAFSQLSNLQSHSRCH), 244–266 (FKCNSCYKCFSDEMTLLEHIPKH), and 275–297 (HICNLCGKSYTQETYLQKHLQKH). Phosphothreonine is present on threonine 395. 2 positions are modified to phosphoserine: serine 399 and serine 401. A disordered region spans residues 417–475 (TPQHHLQQQQQQQQQQQAQQQQQAQHQPSPGPGNSAFTPLSATVAPPPHLQQHRGPPGS). Positions 419 to 443 (QHHLQQQQQQQQQQQAQQQQQAQHQ) are enriched in low complexity. Serine 475 bears the Phosphoserine mark. Tyrosine 479 and tyrosine 481 each carry phosphotyrosine.

This sequence belongs to the krueppel C2H2-type zinc-finger protein family. Interacts with nab; which acts as a coactivator. Interacts with ap. As to expression, largely restricted to subsets of cells in the CNS throughout embryonic and first instar larval (L1) development. Expressed in a population of lateral interneurons, primarily projecting axons in the anterior and posterior commissures. Overlaps with ap within the thoracic ap cluster. By stage 17, it is restricted to 2 neurons within the ap-cluster, with one neuron typically continuing to display higher levels of expression. Selectively expressed at higher levels within the FMRFa Tv neurons. Expressed in all leucokinergic cells.

Its subcellular location is the nucleus. In terms of biological role, transcription factor involved in neuronal fate specification. First required in embryonic CNS development to define the number of cells that express apterous (ap) in the ap thoracic cluster of interneurons. Later on, it plays a central role in the combinatorial code of transcription factors that specifies the fate of the Tv neuron in the ap cluster by participating in the transcription regulation of FMRFa in Tv cells. Also required for projection neuron dendritic targeting. The sequence is that of Zinc finger protein squeeze (sqz) from Drosophila melanogaster (Fruit fly).